The sequence spans 161 residues: Endoribonuclease YbeY (161 aa).

Zn(2+) contacts are provided by histidine 127, histidine 131, and histidine 137.

It belongs to the endoribonuclease YbeY family. It depends on Zn(2+) as a cofactor.

Its subcellular location is the cytoplasm. Single strand-specific metallo-endoribonuclease involved in late-stage 70S ribosome quality control and in maturation of the 3' terminus of the 16S rRNA. The sequence is that of Endoribonuclease YbeY from Listeria monocytogenes serotype 4b (strain CLIP80459).